The primary structure comprises 303 residues: Ubiquinone biosynthesis protein COQ4, mitochondrial (303 aa).

The Zn(2+) site is built by H191, D192, H195, and E207.

The protein belongs to the COQ4 family. In terms of assembly, component of a multi-subunit COQ enzyme complex, composed of at least COQ3, COQ4, COQ5, COQ6, COQ7 and COQ9. Zn(2+) serves as cofactor.

The protein localises to the mitochondrion inner membrane. It carries out the reaction a 4-hydroxy-3-methoxy-5-(all-trans-polyprenyl)benzoate + H(+) = a 2-methoxy-6-(all-trans-polyprenyl)phenol + CO2. The protein operates within cofactor biosynthesis; ubiquinone biosynthesis. Its function is as follows. Lyase that catalyzes the C1-decarboxylation of 4-hydroxy-3-methoxy-5-(all-trans-polyprenyl)benzoic acid into 2-methoxy-6-(all-trans-polyprenyl)phenol during ubiquinone biosynthesis. This Komagataella phaffii (strain GS115 / ATCC 20864) (Yeast) protein is Ubiquinone biosynthesis protein COQ4, mitochondrial.